The chain runs to 150 residues: Toxin coregulated pilus biosynthesis protein Q (150 aa).

Involved in TCP pilus biogenesis. This is Toxin coregulated pilus biosynthesis protein Q (tcpQ) from Vibrio cholerae serotype O1 (strain ATCC 39315 / El Tor Inaba N16961).